We begin with the raw amino-acid sequence, 286 residues long: Meteorin-like protein (286 aa).

The N-terminal stretch at 1-20 (MLRRGLLSFFMVILIDRGTS) is a signal peptide. 5 cysteine pairs are disulfide-bonded: Cys28-Cys51, Cys84-Cys120, Cys165-Cys235, Cys168-Cys259, and Cys178-Cys281. The N-linked (GlcNAc...) asparagine glycan is linked to Asn203.

It belongs to the meteorin family.

Its subcellular location is the secreted. Hormone induced following exercise or cold exposure that promotes energy expenditure. Induced either in the skeletal muscle after exercise or in adipose tissue following cold exposure and is present in the circulation. Able to stimulate energy expenditure associated with the browning of the white fat depots and improves glucose tolerance. This Xenopus laevis (African clawed frog) protein is Meteorin-like protein (metrnl).